Here is a 287-residue protein sequence, read N- to C-terminus: Elongation factor Ts (287 aa).

Residues 80 to 83 (TDFL) are involved in Mg(2+) ion dislocation from EF-Tu.

The protein belongs to the EF-Ts family.

It is found in the cytoplasm. Its function is as follows. Associates with the EF-Tu.GDP complex and induces the exchange of GDP to GTP. It remains bound to the aminoacyl-tRNA.EF-Tu.GTP complex up to the GTP hydrolysis stage on the ribosome. This chain is Elongation factor Ts, found in Pseudomonas savastanoi pv. phaseolicola (strain 1448A / Race 6) (Pseudomonas syringae pv. phaseolicola (strain 1448A / Race 6)).